The chain runs to 288 residues: Ankyrin repeat and SOCS box protein 8 (288 aa).

Phosphoserine is present on serine 17. ANK repeat units follow at residues 52-81, 85-113, 117-146, and 150-179; these read GTLKPLHCACMVSDADCVELLLEKGAEVNA, YNRTVLHYAAEKDEACVEVLLEYGANPNA, NRDTPLHWAAFKNNAECVRALLESGASVNA, and NNDTPLSWAAMKGNLESVSILLDYGAEVRV. The region spanning 235–288 is the SOCS box domain; that stretch reads QLCEKLTVLCSAPGTLKTLARYAVRRSLGLQYLPDAVKGLPLPASLKEYLLLLE.

This sequence belongs to the ankyrin SOCS box (ASB) family. In terms of assembly, interacts with TBK1; this interaction promotes TBK1 proteasomal degradation. Phosphorylated by TBK1.

It is found in the cytoplasm. The protein operates within protein modification; protein ubiquitination. Functionally, may be a substrate-recognition component of a SCF-like ECS (Elongin-Cullin-SOCS-box protein) E3 ubiquitin-protein ligase complex which mediates the ubiquitination and subsequent proteasomal degradation of target proteins. Inhibits IFN-beta production through the IRF3 signaling pathway by targeting TBK1 via 'Lys-48'-linked ubiquitination, leading to its proteasomal degradation. This chain is Ankyrin repeat and SOCS box protein 8 (ASB8), found in Macaca fascicularis (Crab-eating macaque).